The primary structure comprises 223 residues: Thiamine-phosphate synthase (223 aa).

4-amino-2-methyl-5-(diphosphooxymethyl)pyrimidine-binding positions include 42–46 (QLRDK) and Asn-83. Positions 84 and 103 each coordinate Mg(2+). Residue Ser-122 participates in 4-amino-2-methyl-5-(diphosphooxymethyl)pyrimidine binding. 2-[(2R,5Z)-2-carboxy-4-methylthiazol-5(2H)-ylidene]ethyl phosphate is bound at residue 148 to 150 (TPT). Lys-151 lines the 4-amino-2-methyl-5-(diphosphooxymethyl)pyrimidine pocket. Residue Gly-179 participates in 2-[(2R,5Z)-2-carboxy-4-methylthiazol-5(2H)-ylidene]ethyl phosphate binding.

This sequence belongs to the thiamine-phosphate synthase family. Mg(2+) serves as cofactor.

The catalysed reaction is 2-[(2R,5Z)-2-carboxy-4-methylthiazol-5(2H)-ylidene]ethyl phosphate + 4-amino-2-methyl-5-(diphosphooxymethyl)pyrimidine + 2 H(+) = thiamine phosphate + CO2 + diphosphate. It catalyses the reaction 2-(2-carboxy-4-methylthiazol-5-yl)ethyl phosphate + 4-amino-2-methyl-5-(diphosphooxymethyl)pyrimidine + 2 H(+) = thiamine phosphate + CO2 + diphosphate. The enzyme catalyses 4-methyl-5-(2-phosphooxyethyl)-thiazole + 4-amino-2-methyl-5-(diphosphooxymethyl)pyrimidine + H(+) = thiamine phosphate + diphosphate. It participates in cofactor biosynthesis; thiamine diphosphate biosynthesis; thiamine phosphate from 4-amino-2-methyl-5-diphosphomethylpyrimidine and 4-methyl-5-(2-phosphoethyl)-thiazole: step 1/1. Its function is as follows. Condenses 4-methyl-5-(beta-hydroxyethyl)thiazole monophosphate (THZ-P) and 2-methyl-4-amino-5-hydroxymethyl pyrimidine pyrophosphate (HMP-PP) to form thiamine monophosphate (TMP). The protein is Thiamine-phosphate synthase of Mycobacterium avium (strain 104).